We begin with the raw amino-acid sequence, 933 residues long: MYRSTKGASKARRDQINAEIRNLKDLLPISDADKSRLSYLHIMSLACMYTRKSVFFSQDITTASSAEETTGFLSFYELNELIQGMPGFLLLLTGEGKLLYLSDSVSDHLGHSMVDLVAQGDSVYDIIDTADHFIMRSNLVPPTSPDTDRLFRCRFNTSKSVRRQSAGNKLVLIRARCLSQTPSESSPGSYWTSNPVWVCFCAPLEPHTSRGGTASDRESTSASALESSFFLPCFRSQHSRDMRLHEAQESVSVYLGLNVEILRSQSWYSFLHPQDLSHASAQHCSLLREGGEGRAEMVVRVETADHSWVWLYMVLQLETGETPIVSNNYIISETEAWSVRQQLSSEQTQLSLVLGSSTSQQESVSLQSPETLSSPDQVFTPGSSGLSGQSFDFSTAACSTGSTEEQGGSSSMEPAQVESGPRSSLSSMEEETFFQHEPSEPMASPSSASSPIPVTVATVSDLDFLTQNILLPPAFQIDPPLPVLPLPLPPVPTSQAQQTKEFVCTPPYTPQLGGSNFPFGEPHFSFDPTGATSPPPLGQTATVTTTTAPSLSPSAPSNPQSSPPPPTTTLSSLLPLTITSPTTEILFPVEPCSGSLYEKLPPTPDSPGDGDCTVMTLPEVRGPLYVDVPHGPLPYPPEGLLTPEASPGKQPSLPFFSSLRDREKERTEISLLAQHISTLAEGFYLDPLLAKLVPSTLSEHSQSPDSDGLDSIPLLGEFYPLKSWKGLDLPIFQDDESLFEESVLETLLQDLSSSPPLSPTPSSSSHSSPPSSPSTPECWCPSLHFDGVSAVSAGHFCSVQSAHCNNEAGRGAMMSPVNAGNMTDTKAAGEVPMETDVASSPLFTGIPTSPPLQLTASPASPILMPVSSPVSPPSPGLPCAQSLLEELAALEPMFGAGASIAPGLGQQPELYQLQSHVPQQCFRKDGSGSDPPF.

Residues 1-13 (MYRSTKGASKARR) form a basic motif; degenerate region. A bHLH domain is found at 1 to 53 (MYRSTKGASKARRDQINAEIRNLKDLLPISDADKSRLSYLHIMSLACMYTRKS). Residues 14-53 (DQINAEIRNLKDLLPISDADKSRLSYLHIMSLACMYTRKS) form a helix-loop-helix motif region. PAS domains lie at 74 to 148 (SFYE…PDTD) and 220 to 290 (TSAS…LREG). The PAC domain occupies 295–334 (AEMVVRVETADHSWVWLYMVLQLETGETPIVSNNYIISET). The segment covering 361-398 (QESVSLQSPETLSSPDQVFTPGSSGLSGQSFDFSTAAC) has biased composition (polar residues). Disordered stretches follow at residues 361 to 451 (QESV…ASSP), 514 to 573 (GSNF…LSSL), and 750 to 776 (DLSSSPPLSPTPSSSSHSSPPSSPSTP). 4 stretches are compositionally biased toward low complexity: residues 399-411 (STGSTEEQGGSSS), 440-451 (EPMASPSSASSP), 538-560 (GQTATVTTTTAPSLSPSAPSNPQ), and 751-769 (LSSSPPLSPTPSSSSHSSP).

As to quaternary structure, efficient DNA binding requires dimerization with another bHLH protein. Brain-specific.

It is found in the nucleus. Functionally, transcription factor expressed in neurons of the brain that regulates the excitatory-inhibitory balance within neural circuits and is required for contextual memory in the hippocampus. Plays a key role in the structural and functional plasticity of neurons. Acts as an early-response transcription factor in both excitatory and inhibitory neurons, where it induces distinct but overlapping sets of late-response genes in these two types of neurons, allowing the synapses that form on inhibitory and excitatory neurons to be modified by neuronal activity in a manner specific to their function within a circuit, thereby facilitating appropriate circuit responses to sensory experience. The protein is Neuronal PAS domain-containing protein 4A (npas4a) of Danio rerio (Zebrafish).